Reading from the N-terminus, the 4543-residue chain is Low-density lipoprotein receptor-related protein 1 (4543 aa).

The first 21 residues, 1–21, serve as a signal peptide directing secretion; the sequence is MGPLLALAGCLLALLAAPAAR. At 22–4419 the chain is on the extracellular side; that stretch reads ALEAPKTCSP…EFIVGEQQSG (4398 aa). LDL-receptor class A domains lie at 27-68 and 72-112; these read KTCS…ICPQ and SRCQ…HCRE. Cystine bridges form between Cys-29–Cys-42, Cys-36–Cys-55, Cys-49–Cys-66, Cys-74–Cys-87, Cys-81–Cys-100, and Cys-94–Cys-110. In terms of domain architecture, EGF-like 1 spans 113–151; that stretch reads QLANCTALGCQHHCVPTLSGPACYCNNSFQLAEDRRSCK. N-linked (GlcNAc...) asparagine glycosylation occurs at Asn-116. 6 disulfides stabilise this stretch: Cys-117–Cys-126, Cys-122–Cys-135, Cys-137–Cys-150, Cys-156–Cys-166, Cys-162–Cys-175, and Cys-177–Cys-190. N-linked (GlcNAc...) asparagine glycosylation is present at Asn-138. In terms of domain architecture, EGF-like 2; calcium-binding spans 152-191; it reads DFDECTVYGTCSQTCTNTEGSYTCSCVEGYLLQPDNRSCK. N-linked (GlcNAc...) asparagine glycans are attached at residues Asn-187 and Asn-276. 3 LDL-receptor class B repeats span residues 294–336, 337–380, and 381–424; these read GNFY…DPAM, GKVF…DLVS, and RLVY…FENY. An N-linked (GlcNAc...) asparagine glycan is attached at Asn-359. Asn-448 is a glycosylation site (N-linked (GlcNAc...) asparagine). An EGF-like 3 domain is found at 476-522; that stretch reads RSHACEPDQFGKPGGCSDICLLGNSHKSRTCRCRSGFSLGSDGKSCK. 3 cysteine pairs are disulfide-bonded: Cys-480–Cys-495, Cys-491–Cys-506, and Cys-508–Cys-521. LDL-receptor class B repeat units follow at residues 573 to 615, 616 to 661, 662 to 712, and 713 to 756; these read GFIY…DWMG, NNLY…DPLN, GWMY…DIPA, and KILY…YSSF. An N-linked (GlcNAc...) asparagine glycan is attached at Asn-731. The EGF-like 4 domain maps to 801-841; the sequence is GSNKCRVNNGGCSSLCLATPRGRQCACAEDQILGADSVTCE. Cystine bridges form between Cys-805–Cys-816, Cys-812–Cys-825, Cys-827–Cys-840, Cys-852–Cys-864, Cys-859–Cys-877, Cys-871–Cys-888, Cys-893–Cys-905, Cys-900–Cys-918, Cys-912–Cys-929, Cys-934–Cys-946, Cys-941–Cys-959, Cys-953–Cys-969, Cys-974–Cys-987, Cys-982–Cys-1000, Cys-994–Cys-1009, Cys-1013–Cys-1025, Cys-1020–Cys-1038, Cys-1032–Cys-1049, Cys-1060–Cys-1073, Cys-1067–Cys-1086, Cys-1080–Cys-1095, Cys-1102–Cys-1116, Cys-1110–Cys-1129, Cys-1123–Cys-1138, Cys-1143–Cys-1157, Cys-1150–Cys-1170, Cys-1164–Cys-1180, Cys-1183–Cys-1194, Cys-1190–Cys-1204, Cys-1206–Cys-1219, Cys-1225–Cys-1235, Cys-1231–Cys-1244, and Cys-1246–Cys-1259. 8 consecutive LDL-receptor class A domains span residues 850–890, 891–931, 932–971, 972–1011, 1011–1051, 1058–1097, 1100–1140, and 1141–1180; these read PQCQ…LCHQ, HTCP…TCSA, RTCS…SCAY, PTCF…GCSH, HSCS…NCTN, GGCH…NCEG, HVCD…NCES, and LVCK…GELC. Residues Trp-869, Asp-872, Asp-874, Asp-876, Asp-882, and Glu-883 each contribute to the Ca(2+) site. Residue Asn-926 is glycosylated (N-linked (GlcNAc...) asparagine). Trp-1030, Asp-1033, Asp-1035, Asp-1037, Asp-1043, and Glu-1044 together coordinate Ca(2+). Asn-1048 is a glycosylation site (N-linked (GlcNAc...) asparagine). The Ca(2+) site is built by Trp-1078, Asp-1081, Asp-1083, Asp-1085, Asp-1091, and Glu-1092. N-linked (GlcNAc...) asparagine glycosylation is found at Asn-1152 and Asn-1153. EGF-like domains lie at 1181–1220 and 1221–1260; these read DQCS…KTCQ and IQSY…ESCR. 2 N-linked (GlcNAc...) asparagine glycosylation sites follow: Asn-1193 and Asn-1216. Asn-1305 carries an N-linked (GlcNAc...) asparagine glycan. LDL-receptor class B repeat units lie at residues 1307–1353, 1354–1396, 1397–1443, 1444–1488, and 1489–1529; these read SSLY…DWIA, GNIY…DPRY, GILF…DYLE, KRIL…YGGE, and VYWT…YHPS. An N-linked (GlcNAc...) asparagine glycan is attached at Asn-1509. In terms of domain architecture, EGF-like 7 spans 1534-1577; sequence APNPCEANGGKGPCSHLCLINYNRTLSCACPHLMKLDKDNTTCY. Intrachain disulfides connect Cys-1538-Cys-1551, Cys-1547-Cys-1561, and Cys-1563-Cys-1576. Asn-1556, Asn-1573, Asn-1614, and Asn-1643 each carry an N-linked (GlcNAc...) asparagine glycan. LDL-receptor class B repeat units follow at residues 1625-1667, 1668-1711, 1712-1751, and 1752-1796; these read QRIY…DWVS, RNLF…HPLH, GKLY…DYPE, and SKLY…MGDK. Asn-1721, Asn-1731, Asn-1761, and Asn-1823 each carry an N-linked (GlcNAc...) asparagine glycan. Residues 1842–1883 form the EGF-like 8 domain; that stretch reads GSNPCSVNNGDCSQLCLPTSETSRSCMCTAGYSLKSGQQSCE. 3 disulfides stabilise this stretch: Cys-1846/Cys-1857, Cys-1853/Cys-1867, and Cys-1869/Cys-1882. N-linked (GlcNAc...) asparagine glycosylation occurs at Asn-1929. 4 LDL-receptor class B repeats span residues 1930–1972, 1973–2015, 2016–2059, and 2060–2103; these read DTIY…DWIA, GNIY…HPEK, GYLF…DYED, and GKLY…FEDY. N-linked (GlcNAc...) asparagine glycosylation is found at Asn-1991 and Asn-2044. 2 N-linked (GlcNAc...) asparagine glycosylation sites follow: Asn-2113 and Asn-2123. One can recognise an EGF-like 9 domain in the interval 2151-2191; the sequence is GTNVCAQNNGGCQQLCLFRGGGRRTCACAHGMLSEDGVSCR. 3 cysteine pairs are disulfide-bonded: Cys-2155–Cys-2166, Cys-2162–Cys-2176, and Cys-2178–Cys-2190. 5 LDL-receptor class B repeats span residues 2247 to 2288, 2289 to 2337, 2338 to 2382, 2383 to 2425, and 2426 to 2467; these read NRIF…HRGW, DTLY…DECQ, NLMF…DHRA, EKIY…YGDY, and IFWT…VAND. The N-linked (GlcNAc...) asparagine glycan is linked to Asn-2466. In terms of domain architecture, EGF-like 10 spans 2472–2512; that stretch reads ELSPCRVNNGGCQDLCLLTPKGHVNCSCRGERVLQEDFTCK. Disulfide bonds link Cys-2476–Cys-2487, Cys-2483–Cys-2497, and Cys-2499–Cys-2511. Asn-2496 carries N-linked (GlcNAc...) asparagine glycosylation. The N-linked (GlcNAc...) asparagine glycan is linked to Asn-2515. LDL-receptor class A domains lie at 2516–2557, 2558–2596, 2597–2635, 2636–2684, 2688–2730, 2730–2769, and 2770–2812; these read STCN…YCSS, RKCK…PCNK, TSCA…NCTA, TDCS…NCPG, PKCP…RQDK, KFCY…RCRL, and TTCS…GCLY. Intrachain disulfides connect Cys-2518–Cys-2531, Cys-2526–Cys-2544, Cys-2538–Cys-2555, Cys-2560–Cys-2572, Cys-2567–Cys-2585, and Cys-2579–Cys-2594. An N-linked (GlcNAc...) asparagine glycan is attached at Asn-2595. Disulfide bonds link Cys-2599–Cys-2611, Cys-2606–Cys-2624, Cys-2618–Cys-2633, Cys-2638–Cys-2660, Cys-2654–Cys-2673, Cys-2667–Cys-2682, Cys-2690–Cys-2702, Cys-2697–Cys-2715, Cys-2709–Cys-2724, Cys-2732–Cys-2744, Cys-2739–Cys-2757, Cys-2751–Cys-2767, Cys-2772–Cys-2785, Cys-2779–Cys-2798, and Cys-2792–Cys-2810. N-linked (GlcNAc...) asparagine glycosylation is found at Asn-2614 and Asn-2632. The N-linked (GlcNAc...) asparagine glycan is linked to Asn-2813. 3 consecutive LDL-receptor class A domains span residues 2814–2853, 2854–2897, and 2900–2938; these read NTCD…ECEY, PTCG…RCSS, and SKCN…NCFI. Intrachain disulfides connect Cys-2816/Cys-2828, Cys-2823/Cys-2841, Cys-2835/Cys-2851, Cys-2856/Cys-2868, Cys-2863/Cys-2882, Cys-2876/Cys-2895, Cys-2902/Cys-2914, Cys-2909/Cys-2927, Cys-2921/Cys-2936, Cys-2941/Cys-2953, Cys-2949/Cys-2962, Cys-2964/Cys-2977, Cys-2983/Cys-2993, Cys-2989/Cys-3002, and Cys-3004/Cys-3018. N-linked (GlcNAc...) asparagine glycosylation is present at Asn-2903. Residues 2939-2978 enclose the EGF-like 11 domain; it reads NECLNKKLSGCSQECEDLKIGYKCRCRPGFRLKDDGKTCI. The EGF-like 12; calcium-binding domain maps to 2979–3019; sequence DIDECSTTYPCSQKCINTLGSYKCLCIEGYKLKPDNPTSCK. N-linked (GlcNAc...) asparagine glycosylation is found at Asn-3045 and Asn-3086. LDL-receptor class B repeat units follow at residues 3066–3110, 3111–3153, 3154–3197, 3198–3240, and 3241–3281; these read QMIY…DWVG, GNLY…DVQN, GYLY…DYIN, SRIY…FEDY, and IYWT…YHPY. A glycan (N-linked (GlcNAc...) asparagine) is linked at Asn-3176. Asn-3261 carries N-linked (GlcNAc...) asparagine glycosylation. An EGF-like 13 domain is found at 3287–3328; it reads PNHPCKTNNAGCSNLCLLSPGGGHKCACPTNFYLGSDGKTCV. 3 cysteine pairs are disulfide-bonded: Cys-3291–Cys-3302, Cys-3298–Cys-3312, and Cys-3314–Cys-3327. LDL-receptor class A domains are found at residues 3329–3368, 3369–3407, 3408–3447, 3448–3488, 3489–3530, 3531–3569, 3570–3608, 3608–3646, 3649–3689, 3690–3730, and 3736–3776; these read SNCT…DCPE, FKCR…NCDI, HVCL…DCPE, VTCA…NCTQ, MTCG…ECDE, RTCE…SCTP, RPCS…DCIP, PRCE…DCGT, RTCP…ECLK, FQCP…DCES, and KSCS…SCSH. An N-linked (GlcNAc...) asparagine glycan is attached at Asn-3330. 38 disulfides stabilise this stretch: Cys-3331-Cys-3343, Cys-3338-Cys-3356, Cys-3350-Cys-3366, Cys-3371-Cys-3383, Cys-3378-Cys-3396, Cys-3390-Cys-3405, Cys-3410-Cys-3423, Cys-3417-Cys-3436, Cys-3430-Cys-3445, Cys-3450-Cys-3463, Cys-3457-Cys-3476, Cys-3470-Cys-3486, Cys-3491-Cys-3504, Cys-3498-Cys-3517, Cys-3511-Cys-3528, Cys-3533-Cys-3545, Cys-3540-Cys-3558, Cys-3552-Cys-3567, Cys-3572-Cys-3584, Cys-3579-Cys-3597, Cys-3591-Cys-3606, Cys-3610-Cys-3622, Cys-3617-Cys-3635, Cys-3629-Cys-3644, Cys-3658-Cys-3676, Cys-3670-Cys-3687, Cys-3692-Cys-3706, Cys-3700-Cys-3719, Cys-3713-Cys-3728, Cys-3738-Cys-3752, Cys-3747-Cys-3765, Cys-3759-Cys-3774, Cys-3783-Cys-3796, Cys-3790-Cys-3805, Cys-3807-Cys-3820, Cys-3826-Cys-3836, Cys-3832-Cys-3845, and Cys-3847-Cys-3858. A glycan (N-linked (GlcNAc...) asparagine) is linked at Asn-3485. An N-linked (GlcNAc...) asparagine glycan is attached at Asn-3659. 2 consecutive EGF-like domains span residues 3779–3821 and 3822–3859; these read KSYD…NSCQ and DVNE…NMCK. N-linked (GlcNAc...) asparagine glycosylation is present at Asn-3786. N-linked (GlcNAc...) asparagine glycosylation occurs at Asn-3837. 4 LDL-receptor class B repeats span residues 3910-3952, 3969-4011, 4012-4055, and 4056-4100; these read NKIY…THLN, GNIY…DPLR, GTMY…DYHN, and ERLY…FEDY. Positions 3939–3942 match the Recognition site for proteolytical processing motif; that stretch reads RNRR. The N-linked (GlcNAc...) asparagine glycan is linked to Asn-3952. Asn-4074 and Asn-4124 each carry an N-linked (GlcNAc...) asparagine glycan. 7 consecutive EGF-like domains span residues 4146–4182, 4195–4231, 4231–4267, 4267–4303, 4303–4339, 4339–4374, and 4372–4409; these read VTNP…GTCV, TTDT…ERCQ, QINQ…SRCD, DQQV…DRCQ, QYQQ…AQCQ, QDNK…PSCL, and SCLT…MRCE. 21 disulfides stabilise this stretch: Cys-4150–Cys-4159, Cys-4155–Cys-4168, Cys-4170–Cys-4181, Cys-4199–Cys-4209, Cys-4203–Cys-4219, Cys-4221–Cys-4230, Cys-4235–Cys-4245, Cys-4239–Cys-4255, Cys-4257–Cys-4266, Cys-4271–Cys-4281, Cys-4275–Cys-4291, Cys-4293–Cys-4302, Cys-4307–Cys-4317, Cys-4311–Cys-4327, Cys-4329–Cys-4338, Cys-4343–Cys-4351, Cys-4346–Cys-4362, Cys-4364–Cys-4373, Cys-4376–Cys-4386, Cys-4380–Cys-4397, and Cys-4399–Cys-4408. N-linked (GlcNAc...) asparagine glycosylation is present at Asn-4178. Asn-4278 is a glycosylation site (N-linked (GlcNAc...) asparagine). The chain crosses the membrane as a helical span at residues 4420 to 4443; it reads RTASIVIPILLLLLLLAVVAFAWY. Residues 4444–4543 lie on the Cytoplasmic side of the membrane; that stretch reads KWRIKGAKGF…ADDDLTDPLA (100 aa). The short motif at 4501–4506 is the NPXY motif element; sequence FTNPVY. The tract at residues 4522–4543 is disordered; the sequence is STDEKRELLARGADDDLTDPLA. Basic and acidic residues predominate over residues 4523–4535; sequence TDEKRELLARGAD.

This sequence belongs to the LDLR family. As to quaternary structure, binds vitellogenin and LRPAP1 (alpha 2-macroglobulin). Cleaved into a 85 kDa membrane-spanning subunit (LRP-85) and a 515 kDa large extracellular domain (LRP-515) that remains non-covalently associated. In terms of tissue distribution, somatic.

The protein localises to the membrane. The protein resides in the coated pit. Its function is as follows. Endocytic receptor involved in endocytosis and in phagocytosis of apoptotic cells. Involved in cellular lipid homeostasis. Involved in the plasma clearance of chylomicron remnants and activated LRPAP1 (alpha 2-macroglobulin), as well as the local metabolism of complexes between plasminogen activators and their endogenous inhibitors. Acts as an alpha-2-macroglobulin receptor. The chain is Low-density lipoprotein receptor-related protein 1 (LRP1) from Gallus gallus (Chicken).